A 287-amino-acid polypeptide reads, in one-letter code: ATP synthase gamma chain (287 aa).

This sequence belongs to the ATPase gamma chain family. F-type ATPases have 2 components, CF(1) - the catalytic core - and CF(0) - the membrane proton channel. CF(1) has five subunits: alpha(3), beta(3), gamma(1), delta(1), epsilon(1). CF(0) has three main subunits: a, b and c.

The protein localises to the cell inner membrane. Functionally, produces ATP from ADP in the presence of a proton gradient across the membrane. The gamma chain is believed to be important in regulating ATPase activity and the flow of protons through the CF(0) complex. This Yersinia enterocolitica serotype O:8 / biotype 1B (strain NCTC 13174 / 8081) protein is ATP synthase gamma chain.